The following is a 490-amino-acid chain: Glutamyl-tRNA(Gln) amidotransferase subunit A (490 aa).

Active-site charge relay system residues include lysine 78 and serine 159. Catalysis depends on serine 183, which acts as the Acyl-ester intermediate.

The protein belongs to the amidase family. GatA subfamily. In terms of assembly, heterotrimer of A, B and C subunits.

The enzyme catalyses L-glutamyl-tRNA(Gln) + L-glutamine + ATP + H2O = L-glutaminyl-tRNA(Gln) + L-glutamate + ADP + phosphate + H(+). Functionally, allows the formation of correctly charged Gln-tRNA(Gln) through the transamidation of misacylated Glu-tRNA(Gln) in organisms which lack glutaminyl-tRNA synthetase. The reaction takes place in the presence of glutamine and ATP through an activated gamma-phospho-Glu-tRNA(Gln). The chain is Glutamyl-tRNA(Gln) amidotransferase subunit A from Paramagnetospirillum magneticum (strain ATCC 700264 / AMB-1) (Magnetospirillum magneticum).